Consider the following 142-residue polypeptide: Galactose-6-phosphate isomerase subunit LacA (142 aa).

The protein belongs to the LacAB/RpiB family. As to quaternary structure, heteromultimeric protein consisting of LacA and LacB.

The catalysed reaction is aldehydo-D-galactose 6-phosphate = keto-D-tagatose 6-phosphate. The protein operates within carbohydrate metabolism; D-galactose 6-phosphate degradation; D-tagatose 6-phosphate from D-galactose 6-phosphate: step 1/1. The polypeptide is Galactose-6-phosphate isomerase subunit LacA (Streptococcus mutans serotype c (strain ATCC 700610 / UA159)).